The sequence spans 81 residues: Large ribosomal subunit protein bL31B (81 aa).

It belongs to the bacterial ribosomal protein bL31 family. Type B subfamily. Part of the 50S ribosomal subunit.

The polypeptide is Large ribosomal subunit protein bL31B (Limosilactobacillus fermentum (strain NBRC 3956 / LMG 18251) (Lactobacillus fermentum)).